The primary structure comprises 216 residues: MKAVRLAVIDYDAGNLHSACKGLERAGAEVQLVTEPAGLAAFDGLVLPGDGAFDPAMQQLRARGFGEAIRQAIERQQPFLGICIGLQVLFEDSEEGTEPGLGIVPGRVQRFRPEPGLRIPHMGWNQLHLTQPDSPLWAGIPEQSWVYFVHSYHAVPKDPSWVVATTQHGSQTCVAAIARGTLFATQFHPEKSGPVGLKILQNFVEFVARRLPAAGA.

Residues 5–213 (RLAVIDYDAG…VEFVARRLPA (209 aa)) form the Glutamine amidotransferase type-1 domain. The active-site Nucleophile is Cys-83. Residues His-188 and Glu-190 contribute to the active site.

As to quaternary structure, heterodimer of HisH and HisF.

It is found in the cytoplasm. The enzyme catalyses 5-[(5-phospho-1-deoxy-D-ribulos-1-ylimino)methylamino]-1-(5-phospho-beta-D-ribosyl)imidazole-4-carboxamide + L-glutamine = D-erythro-1-(imidazol-4-yl)glycerol 3-phosphate + 5-amino-1-(5-phospho-beta-D-ribosyl)imidazole-4-carboxamide + L-glutamate + H(+). It catalyses the reaction L-glutamine + H2O = L-glutamate + NH4(+). It participates in amino-acid biosynthesis; L-histidine biosynthesis; L-histidine from 5-phospho-alpha-D-ribose 1-diphosphate: step 5/9. Functionally, IGPS catalyzes the conversion of PRFAR and glutamine to IGP, AICAR and glutamate. The HisH subunit catalyzes the hydrolysis of glutamine to glutamate and ammonia as part of the synthesis of IGP and AICAR. The resulting ammonia molecule is channeled to the active site of HisF. In Synechococcus sp. (strain JA-3-3Ab) (Cyanobacteria bacterium Yellowstone A-Prime), this protein is Imidazole glycerol phosphate synthase subunit HisH.